Reading from the N-terminus, the 350-residue chain is Ferredoxin--NADP reductase (350 aa).

Positions 25, 44, 52, 57, 97, 132, 298, and 339 each coordinate FAD.

Belongs to the ferredoxin--NADP reductase type 2 family. In terms of assembly, homodimer. FAD serves as cofactor.

The catalysed reaction is 2 reduced [2Fe-2S]-[ferredoxin] + NADP(+) + H(+) = 2 oxidized [2Fe-2S]-[ferredoxin] + NADPH. In Chlorobium limicola (strain DSM 245 / NBRC 103803 / 6330), this protein is Ferredoxin--NADP reductase.